The following is a 551-amino-acid chain: MSPKSVPDIGDVLARQAEDIDTRYHPSAALRRQLNKVFPTHWSFLLGEIALYSFIVLLLTGVYLTLFFDPSMTDVTYNGVYQPLRGVEMSRAYQSTLDISFEVRGGLFVRQIHHWAALMFTAAIMVHLARIFFTGAFRRPRETNWVIGSLLLILAMFEGYFGYSMPDDLLSGIGLRAALSSITLGIPVIGTWLHWALFGGDFPGTILIPRLYALHILLIPGVILALIGLHLALVWFQKHTQFPGPGRTEYNVVGVRVMPVFAFKSGAFFAAIVGVLGLMGGFLQINPIWNLGPYKPSQVSAGSQPDFYMMWTEGLARIWPAWEFYFWHHTIPAPVWVAVIMALVFVLLITYPFLEKRFTGDYAHHNLLQRPRDVPVRTSIGAMAITFYMVLTLAAMNDIIALKFHISLNATTWIGRIGMVILPLLVYFITYRWCIGLQRSDRAVLEHGIETGIIKRLPHGAYIELHQPLGPVDDHGHPIPLEYQGTAVPKRMNKLGSAGSPSSGSFLFADPVSEDAALREATHVAEQRALTALREHQDSIASSPNGERGKH.

A helical membrane pass occupies residues 44-64 (FLLGEIALYSFIVLLLTGVYL). 2 residues coordinate heme: H113 and H127. The next 3 membrane-spanning stretches (helical) occupy residues 117–137 (ALMFTAAIMVHLARIFFTGAF), 145–165 (WVIGSLLLILAMFEGYFGYSM), and 188–208 (VIGTWLHWALFGGDFPGTILI). Heme-binding residues include H215 and H230. Helical transmembrane passes span 216–236 (ILLIPGVILALIGLHLALVWF), 265–285 (SGAFFAAIVGVLGLMGGFLQI), 334–354 (PVWVAVIMALVFVLLITYPFL), 380–400 (IGAMAITFYMVLTLAAMNDII), and 417–437 (IGMVILPLLVYFITYRWCIGL). The tract at residues 532–551 (ALREHQDSIASSPNGERGKH) is disordered.

The protein belongs to the cytochrome b family. The cytochrome bc1 complex is composed of a cytochrome b (QcrB), the Rieske iron-sulfur protein (QcrA) and a diheme cytochrome c (QcrC) subunit. It depends on heme as a cofactor.

Its subcellular location is the cell membrane. It carries out the reaction a quinol + 2 Fe(III)-[cytochrome c](out) = a quinone + 2 Fe(II)-[cytochrome c](out) + 2 H(+)(out). In terms of biological role, cytochrome b subunit of the cytochrome bc1 complex, an essential component of the respiratory electron transport chain required for ATP synthesis. The bc1 complex catalyzes the oxidation of ubiquinol and the reduction of cytochrome c in the respiratory chain. The bc1 complex operates through a Q-cycle mechanism that couples electron transfer to generation of the proton gradient that drives ATP synthesis. The cytochrome b subunit contains two ubiquinol reactive sites: the oxidation (QP) site and the reduction (QN) site. The protein is Cytochrome bc1 complex cytochrome b subunit (qcrB) of Mycobacterium leprae (strain TN).